Here is a 354-residue protein sequence, read N- to C-terminus: Sulfate/thiosulfate import ATP-binding protein CysA (354 aa).

The ABC transporter domain occupies 3–237 (IEVRGLSKRF…PATPFVYGFL (235 aa)). 35–42 (GPSGCGKT) contacts ATP.

This sequence belongs to the ABC transporter superfamily. Sulfate/tungstate importer (TC 3.A.1.6) family. In terms of assembly, the complex is composed of two ATP-binding proteins (CysA), two transmembrane proteins (CysT and CysW) and a solute-binding protein (CysP).

Its subcellular location is the cell inner membrane. It carries out the reaction sulfate(out) + ATP + H2O = sulfate(in) + ADP + phosphate + H(+). The enzyme catalyses thiosulfate(out) + ATP + H2O = thiosulfate(in) + ADP + phosphate + H(+). Part of the ABC transporter complex CysAWTP involved in sulfate/thiosulfate import. Responsible for energy coupling to the transport system. This Bordetella pertussis (strain Tohama I / ATCC BAA-589 / NCTC 13251) protein is Sulfate/thiosulfate import ATP-binding protein CysA.